Consider the following 139-residue polypeptide: uncharacterized protein (139 aa).

Residues 5 to 114 (IFCKIINKEL…IPRFKNDGFG (110 aa)) enclose the HIT domain. Positions 99–103 (HTHFH) match the Histidine triad motif motif.

This is an uncharacterized protein from Borreliella burgdorferi (strain ATCC 35210 / DSM 4680 / CIP 102532 / B31) (Borrelia burgdorferi).